The sequence spans 643 residues: NAD-dependent malic enzyme, mitochondrial (643 aa).

The N-terminal 38 residues, 1-38 (PRVRSFIAHQSGITSVIRRSPDIAHRMVRSLSVSSQRN), are a transit peptide targeting the mitochondrion. 3 residues coordinate fumarate: Gln116, Arg119, and Arg143. Tyr164 serves as the catalytic Proton donor. Arg219 provides a ligand contact to (S)-malate. Arg219 is an NAD(+) binding site. The active-site Proton acceptor is Lys237. 2 residues coordinate a divalent metal cation: Glu309 and Asp310. Residues Asn313, Asp333, Ala366, Ala369, and Asn472 each coordinate NAD(+). Asp333 contributes to the a divalent metal cation binding site. Residues Asn472 and Asn516 each coordinate (S)-malate.

It belongs to the malic enzymes family. As to quaternary structure, homotetramer. The cofactor is Mg(2+). It depends on Mn(2+) as a cofactor.

Its subcellular location is the mitochondrion matrix. The catalysed reaction is (S)-malate + NAD(+) = pyruvate + CO2 + NADH. It carries out the reaction oxaloacetate + H(+) = pyruvate + CO2. Subject to allosteric activation by fumarate. In terms of biological role, NAD-dependent mitochondrial malic enzyme that catalyzes the oxidative decarboxylation of malate to pyruvate. The sequence is that of NAD-dependent malic enzyme, mitochondrial from Ascaris suum (Pig roundworm).